The chain runs to 163 residues: Ribonuclease H (163 aa).

An RNase H type-1 domain is found at 1–142 (MRKQVAIFTD…CDELARTAAC (142 aa)). Residues D10, E48, D70, and D134 each contribute to the Mg(2+) site.

This sequence belongs to the RNase H family. As to quaternary structure, monomer. The cofactor is Mg(2+).

Its subcellular location is the cytoplasm. It catalyses the reaction Endonucleolytic cleavage to 5'-phosphomonoester.. Endonuclease that specifically degrades the RNA of RNA-DNA hybrids. The chain is Ribonuclease H from Sodalis glossinidius (strain morsitans).